The following is a 532-amino-acid chain: Glucose-6-phosphate isomerase (532 aa).

Residue glutamate 322 is the Proton donor of the active site. Residues histidine 351 and lysine 457 contribute to the active site.

This sequence belongs to the GPI family.

It localises to the cytoplasm. It carries out the reaction alpha-D-glucose 6-phosphate = beta-D-fructose 6-phosphate. It functions in the pathway carbohydrate biosynthesis; gluconeogenesis. The protein operates within carbohydrate degradation; glycolysis; D-glyceraldehyde 3-phosphate and glycerone phosphate from D-glucose: step 2/4. Catalyzes the reversible isomerization of glucose-6-phosphate to fructose-6-phosphate. The sequence is that of Glucose-6-phosphate isomerase from Synechococcus sp. (strain JA-3-3Ab) (Cyanobacteria bacterium Yellowstone A-Prime).